Reading from the N-terminus, the 209-residue chain is Kynurenine formamidase (209 aa).

Tryptophan 20 is a substrate binding site. Residues histidine 50, histidine 54, and aspartate 56 each contribute to the Zn(2+) site. The Proton donor/acceptor role is filled by histidine 60. 2 residues coordinate Zn(2+): histidine 161 and glutamate 173.

This sequence belongs to the Cyclase 1 superfamily. KynB family. In terms of assembly, homodimer. Requires Zn(2+) as cofactor.

It catalyses the reaction N-formyl-L-kynurenine + H2O = L-kynurenine + formate + H(+). It participates in amino-acid degradation; L-tryptophan degradation via kynurenine pathway; L-kynurenine from L-tryptophan: step 2/2. Functionally, catalyzes the hydrolysis of N-formyl-L-kynurenine to L-kynurenine, the second step in the kynurenine pathway of tryptophan degradation. The sequence is that of Kynurenine formamidase from Bacillus cereus (strain ZK / E33L).